We begin with the raw amino-acid sequence, 302 residues long: Ethylmalonyl-CoA decarboxylase (302 aa).

The protein belongs to the enoyl-CoA hydratase/isomerase family.

The protein resides in the cytoplasm. It localises to the cytosol. The enzyme catalyses (2S)-ethylmalonyl-CoA + H(+) = butanoyl-CoA + CO2. The catalysed reaction is (S)-methylmalonyl-CoA + H(+) = propanoyl-CoA + CO2. It carries out the reaction (2R)-ethylmalonyl-CoA + H(+) = butanoyl-CoA + CO2. Functionally, decarboxylates ethylmalonyl-CoA, a potentially toxic metabolite, to form butyryl-CoA, suggesting it might be involved in metabolite proofreading. Acts preferentially on (S)-ethylmalonyl-CoA but also has some activity on the (R)-isomer. Also has methylmalonyl-CoA decarboxylase activity at lower level. The sequence is that of Ethylmalonyl-CoA decarboxylase (echdc1) from Danio rerio (Zebrafish).